Reading from the N-terminus, the 106-residue chain is Small ribosomal subunit protein uS10 (106 aa).

It belongs to the universal ribosomal protein uS10 family. Part of the 30S ribosomal subunit.

Involved in the binding of tRNA to the ribosomes. The polypeptide is Small ribosomal subunit protein uS10 (Archaeoglobus fulgidus (strain ATCC 49558 / DSM 4304 / JCM 9628 / NBRC 100126 / VC-16)).